Reading from the N-terminus, the 937-residue chain is Isoleucine--tRNA ligase (937 aa).

A 'HIGH' region motif is present at residues 58–68 (PYANGNIHIGH). Glu-560 contacts L-isoleucyl-5'-AMP. The 'KMSKS' region motif lies at 601 to 605 (KMSKS). Lys-604 is a binding site for ATP. Residues Cys-900, Cys-903, Cys-920, and Cys-923 each coordinate Zn(2+).

Belongs to the class-I aminoacyl-tRNA synthetase family. IleS type 1 subfamily. Monomer. Zn(2+) serves as cofactor.

Its subcellular location is the cytoplasm. It carries out the reaction tRNA(Ile) + L-isoleucine + ATP = L-isoleucyl-tRNA(Ile) + AMP + diphosphate. Its function is as follows. Catalyzes the attachment of isoleucine to tRNA(Ile). As IleRS can inadvertently accommodate and process structurally similar amino acids such as valine, to avoid such errors it has two additional distinct tRNA(Ile)-dependent editing activities. One activity is designated as 'pretransfer' editing and involves the hydrolysis of activated Val-AMP. The other activity is designated 'posttransfer' editing and involves deacylation of mischarged Val-tRNA(Ile). The sequence is that of Isoleucine--tRNA ligase from Thioalkalivibrio sulfidiphilus (strain HL-EbGR7).